Here is a 570-residue protein sequence, read N- to C-terminus: Periplasmic trehalase (570 aa).

An N-terminal signal peptide occupies residues Met1–Ala34. Substrate contacts are provided by residues Arg157, Trp164 to Asp165, Asn201, Arg210 to Gln212, Arg282 to Glu284, and Gly315. Catalysis depends on proton donor/acceptor residues Asp317 and Glu501. Residue Glu516 participates in substrate binding. Residues Lys542 to Pro570 are disordered. The span at Pro552 to Pro570 shows a compositional bias: low complexity.

It belongs to the glycosyl hydrolase 37 family. As to quaternary structure, monomer.

The protein resides in the periplasm. The enzyme catalyses alpha,alpha-trehalose + H2O = alpha-D-glucose + beta-D-glucose. In terms of biological role, provides the cells with the ability to utilize trehalose at high osmolarity by splitting it into glucose molecules that can subsequently be taken up by the phosphotransferase-mediated uptake system. This chain is Periplasmic trehalase, found in Citrobacter koseri (strain ATCC BAA-895 / CDC 4225-83 / SGSC4696).